The primary structure comprises 353 residues: Probable dual-specificity RNA methyltransferase RlmN (353 aa).

The active-site Proton acceptor is the Glu-104. The region spanning 112 to 341 (DGGRKTICIS…ILNRRSPGKD (230 aa)) is the Radical SAM core domain. Cys-119 and Cys-346 are disulfide-bonded. [4Fe-4S] cluster contacts are provided by Cys-126, Cys-130, and Cys-133. Residues 173-174 (GE), Ser-205, 228-230 (SLN), and Asn-304 each bind S-adenosyl-L-methionine. The active-site S-methylcysteine intermediate is Cys-346.

The protein belongs to the radical SAM superfamily. RlmN family. Requires [4Fe-4S] cluster as cofactor.

Its subcellular location is the cytoplasm. The catalysed reaction is adenosine(2503) in 23S rRNA + 2 reduced [2Fe-2S]-[ferredoxin] + 2 S-adenosyl-L-methionine = 2-methyladenosine(2503) in 23S rRNA + 5'-deoxyadenosine + L-methionine + 2 oxidized [2Fe-2S]-[ferredoxin] + S-adenosyl-L-homocysteine. It catalyses the reaction adenosine(37) in tRNA + 2 reduced [2Fe-2S]-[ferredoxin] + 2 S-adenosyl-L-methionine = 2-methyladenosine(37) in tRNA + 5'-deoxyadenosine + L-methionine + 2 oxidized [2Fe-2S]-[ferredoxin] + S-adenosyl-L-homocysteine. Specifically methylates position 2 of adenine 2503 in 23S rRNA and position 2 of adenine 37 in tRNAs. This Leptospira interrogans serogroup Icterohaemorrhagiae serovar Lai (strain 56601) protein is Probable dual-specificity RNA methyltransferase RlmN.